The sequence spans 1198 residues: Rac guanine nucleotide exchange factor B (1198 aa).

Residues 1–104 (MFSNFFGSSK…QHQGVITSLQ (104 aa)) are disordered. The segment covering 8–20 (SSKRNTIASSSSS) has biased composition (low complexity). The segment covering 21-34 (SKKDKDNGKDESSK) has biased composition (basic and acidic residues). The span at 35-58 (LKNSGSSTLPKPITNNESGNNFIT) shows a compositional bias: polar residues. Low complexity predominate over residues 59–97 (SPSVSSPLISPLSSSPSPLLSSSSNSIQSTSHQQQQQHQ). The Calponin-homology (CH) 1 domain occupies 126-232 (SSLEQTARKW…NIVVLGKHAS (107 aa)). A disordered region spans residues 260–284 (FGGNHNNNNNNNNNNNTSNGDLSPV). The span at 263–275 (NHNNNNNNNNNNN) shows a compositional bias: low complexity. 2 consecutive Calponin-homology (CH) domains span residues 341–449 (PELQ…NKMY) and 511–619 (PEDM…ENFD). The DH domain maps to 632–846 (RRQKVIEEII…KRVADHVNES (215 aa)). A PH domain is found at 876-1026 (TYIREGFLEI…WMEDLRSCLQ (151 aa)). Acidic residues predominate over residues 940 to 952 (GEACVDGDDDGGE). 2 disordered regions span residues 940–989 (GEAC…SNKS) and 1076–1198 (NNNN…IDNQ). Composition is skewed to low complexity over residues 977 to 989 (NSNN…SNKS) and 1076 to 1118 (NNNN…NNND). Over residues 1155–1167 (DETISDTESDDYE) the composition is skewed to acidic residues. Positions 1188–1198 (FSDTIKNIDNQ) are enriched in polar residues.

As to quaternary structure, binds to F-actin.

It localises to the late endosome. Functionally, involved in the regulation of the late steps of the endocytic pathway. The protein is Rac guanine nucleotide exchange factor B (gxcB) of Dictyostelium discoideum (Social amoeba).